Here is a 962-residue protein sequence, read N- to C-terminus: Phagocyte signaling-impaired protein (962 aa).

TPR repeat units follow at residues 45–78 (LCAR…KPTD), 79–112 (DSTL…NPGN), and 523–560 (QIQL…FTNS). The interval 856-880 (TKVKKKQGDNKTQDTPQPVSEKERS) is disordered.

The protein belongs to the MDM20/NAA25 family. In terms of assembly, component of the N-terminal acetyltransferase B (NatB) complex.

It localises to the lysosome. Its function is as follows. Non-catalytic subunit of the NatB complex which catalyzes acetylation of the N-terminal methionine residues of proteins beginning with Met-Asp or Met-Glu. Has 2 roles in the larval immune response: required both for the phagocytic degradation of internalized bacteria and for the induction of Defensin in the fat body. Within the phagocytic blood cells, has a role in detection of infection and activation of the humoral immune response. This is Phagocyte signaling-impaired protein from Drosophila pseudoobscura pseudoobscura (Fruit fly).